We begin with the raw amino-acid sequence, 125 residues long: MKEQTEIGKIKEGRYIVIDEEPCKVVGLATSKPGKHGAAKARIDAVGIFDGVKRSIVSPVSAKTYVPVVERKSGQVISIAGDMAQLMDMKDYSNFEIAIPEDKKGTLEVGKEIMYIESMGKRKLD.

At K35 the chain carries Hypusine.

Belongs to the eIF-5A family.

The protein localises to the cytoplasm. Its function is as follows. Functions by promoting the formation of the first peptide bond. The protein is Translation initiation factor 5A (eIF5A) of Methanoregula boonei (strain DSM 21154 / JCM 14090 / 6A8).